We begin with the raw amino-acid sequence, 288 residues long: Diaminopimelate epimerase (288 aa).

2 residues coordinate substrate: Asn-14 and Asn-67. Cys-76 functions as the Proton donor in the catalytic mechanism. Substrate-binding positions include 77–78 (GN), Asn-166, Asn-199, and 217–218 (ER). Residue Cys-226 is the Proton acceptor of the active site. A substrate-binding site is contributed by 227–228 (GT).

It belongs to the diaminopimelate epimerase family. In terms of assembly, homodimer.

It localises to the cytoplasm. It catalyses the reaction (2S,6S)-2,6-diaminopimelate = meso-2,6-diaminopimelate. It participates in amino-acid biosynthesis; L-lysine biosynthesis via DAP pathway; DL-2,6-diaminopimelate from LL-2,6-diaminopimelate: step 1/1. In terms of biological role, catalyzes the stereoinversion of LL-2,6-diaminopimelate (L,L-DAP) to meso-diaminopimelate (meso-DAP), a precursor of L-lysine and an essential component of the bacterial peptidoglycan. The protein is Diaminopimelate epimerase of Bacillus cereus (strain ATCC 14579 / DSM 31 / CCUG 7414 / JCM 2152 / NBRC 15305 / NCIMB 9373 / NCTC 2599 / NRRL B-3711).